The following is a 669-amino-acid chain: DNA mismatch repair protein MutL (669 aa).

Residues 356–377 (FEQRQNTENNQEKTFSSEESNS) are disordered. Over residues 361 to 377 (NTENNQEKTFSSEESNS) the composition is skewed to polar residues.

Belongs to the DNA mismatch repair MutL/HexB family.

In terms of biological role, this protein is involved in the repair of mismatches in DNA. It is required for dam-dependent methyl-directed DNA mismatch repair. May act as a 'molecular matchmaker', a protein that promotes the formation of a stable complex between two or more DNA-binding proteins in an ATP-dependent manner without itself being part of a final effector complex. The protein is DNA mismatch repair protein MutL of Staphylococcus aureus (strain MSSA476).